Reading from the N-terminus, the 380-residue chain is MAPNLRKSHPLLKMINNSLIDLPTPSNISAWWNFGSLLGICLLTQILTGLLLAMHYTADTTLAFSSVAHTCRNVQYGWLIRNLHANGASFFFICIYLHIGRGFYYGSYLYKETWNTGVILLLTLMATAFVGYVLPWGQMSFWGATVITNLFSAIPYIGQTLVEWAWGGFSVDNPTLTRFFALHFLLPFMITGLTTIHLTFLHESGSNNPLGITSNCDKIPFHPYFTLKDFLGFTLMLLPLTTLALFSPNLLGDPENFTPANPLITPPHIKPEWYFLFAYAILRSIPNKLGGVLALAASVLILFLAPFLHKAKQRTMTFRPISQLLFWILVTNLLILTWVGSQPVEHPFIIIGQLASITYFTILLILFPIIGALENKMLNY.

The next 4 membrane-spanning stretches (helical) occupy residues phenylalanine 34–methionine 54, tryptophan 78–isoleucine 99, tryptophan 114–leucine 134, and phenylalanine 179–threonine 199. Residues histidine 84 and histidine 98 each coordinate heme b. Residues histidine 183 and histidine 197 each contribute to the heme b site. Histidine 202 is a binding site for a ubiquinone. 4 helical membrane-spanning segments follow: residues leucine 227–serine 247, leucine 289–histidine 309, isoleucine 321–serine 341, and phenylalanine 348–proline 368.

The protein belongs to the cytochrome b family. As to quaternary structure, the cytochrome bc1 complex contains 11 subunits: 3 respiratory subunits (MT-CYB, CYC1 and UQCRFS1), 2 core proteins (UQCRC1 and UQCRC2) and 6 low-molecular weight proteins (UQCRH/QCR6, UQCRB/QCR7, UQCRQ/QCR8, UQCR10/QCR9, UQCR11/QCR10 and a cleavage product of UQCRFS1). This cytochrome bc1 complex then forms a dimer. Heme b serves as cofactor.

The protein localises to the mitochondrion inner membrane. Functionally, component of the ubiquinol-cytochrome c reductase complex (complex III or cytochrome b-c1 complex) that is part of the mitochondrial respiratory chain. The b-c1 complex mediates electron transfer from ubiquinol to cytochrome c. Contributes to the generation of a proton gradient across the mitochondrial membrane that is then used for ATP synthesis. The polypeptide is Cytochrome b (MT-CYB) (Pelecanoides urinatrix (Common diving petrel)).